The following is an 81-amino-acid chain: uncharacterized protein (81 aa).

2 helical membrane-spanning segments follow: residues 4-24 (IFKM…FNYT) and 61-81 (NIYT…LHII).

The protein resides in the cell membrane. This is an uncharacterized protein from Bacillus subtilis (strain 168).